Consider the following 250-residue polypeptide: Ditrans,polycis-undecaprenyl-diphosphate synthase ((2E,6E)-farnesyl-diphosphate specific) (250 aa).

The active site involves Asp-27. Asp-27 serves as a coordination point for Mg(2+). Substrate contacts are provided by residues 28–31 (GNGR), Trp-32, Arg-40, His-44, and 72–74 (SSE). Asn-75 serves as the catalytic Proton acceptor. Trp-76, Arg-78, and Arg-195 together coordinate substrate. A Mg(2+)-binding site is contributed by His-200. 201 to 203 (RIS) serves as a coordination point for substrate. Glu-214 is a Mg(2+) binding site.

The protein belongs to the UPP synthase family. In terms of assembly, homodimer. Requires Mg(2+) as cofactor.

It catalyses the reaction 8 isopentenyl diphosphate + (2E,6E)-farnesyl diphosphate = di-trans,octa-cis-undecaprenyl diphosphate + 8 diphosphate. Catalyzes the sequential condensation of isopentenyl diphosphate (IPP) with (2E,6E)-farnesyl diphosphate (E,E-FPP) to yield (2Z,6Z,10Z,14Z,18Z,22Z,26Z,30Z,34E,38E)-undecaprenyl diphosphate (di-trans,octa-cis-UPP). UPP is the precursor of glycosyl carrier lipid in the biosynthesis of bacterial cell wall polysaccharide components such as peptidoglycan and lipopolysaccharide. This is Ditrans,polycis-undecaprenyl-diphosphate synthase ((2E,6E)-farnesyl-diphosphate specific) from Blochmanniella floridana.